The primary structure comprises 62 residues: Bacteriocin piscicolin-126 (62 aa).

The propeptide occupies 1–18; sequence MKTVKELSVKEMQLTTGG. Residues C27 and C32 are joined by a disulfide bond.

It localises to the secreted. Its function is as follows. Inhibits the growth of several Gram-positive bacteria, especially the food-borne pathogen L.monocytogenes, but has no effect on the growth of a number of yeasts and Gram-negative bacteria. The protein is Bacteriocin piscicolin-126 (pisA) of Carnobacterium maltaromaticum (Carnobacterium piscicola).